The primary structure comprises 96 residues: Alpha-elapitoxin-Al2b (96 aa).

Residues 1-21 (MKTLLLTLVVVTIVCLDFGGG) form the signal peptide. 5 disulfide bridges follow: Cys24–Cys41, Cys34–Cys62, Cys47–Cys51, Cys66–Cys77, and Cys78–Cys83.

Belongs to the three-finger toxin family. Long-chain subfamily. Type II alpha-neurotoxin sub-subfamily. As to expression, expressed by the venom gland.

The protein resides in the secreted. In terms of biological role, potent long-chain postsynaptic neurotoxin. Pseudo-irreversibly inhibits the nicotinic acetylcholine receptor through competitive antagonism. The chain is Alpha-elapitoxin-Al2b from Austrelaps labialis (Pygmy copperhead).